Consider the following 163-residue polypeptide: Small ribosomal subunit protein uS5 (163 aa).

The region spanning 8-71 is the S5 DRBM domain; it reads FIEKVVSLNR…EQARKAMMKI (64 aa).

The protein belongs to the universal ribosomal protein uS5 family. In terms of assembly, part of the 30S ribosomal subunit. Contacts proteins S4 and S8.

Its function is as follows. With S4 and S12 plays an important role in translational accuracy. Functionally, located at the back of the 30S subunit body where it stabilizes the conformation of the head with respect to the body. This chain is Small ribosomal subunit protein uS5, found in Lawsonia intracellularis (strain PHE/MN1-00).